The sequence spans 142 residues: MIEQNETARPGDGLDWSAVLDTLPFNSDGLLPAIAQQHDSNEVLMLAWMNRQALEETLQTGRVCYYSRSRGTLWRKGESSGQVQHLHELRLDCDGDTLLLRVDQQGPACHTGRRSCFYNVLQGNRVVVSEPPQVDPQTLYGP.

Aspartate 92 provides a ligand contact to Mg(2+). Residue cysteine 93 coordinates Zn(2+). Residues aspartate 94 and aspartate 96 each contribute to the Mg(2+) site. Positions 109 and 116 each coordinate Zn(2+).

It belongs to the PRA-CH family. Homodimer. Mg(2+) is required as a cofactor. The cofactor is Zn(2+).

The protein localises to the cytoplasm. It catalyses the reaction 1-(5-phospho-beta-D-ribosyl)-5'-AMP + H2O = 1-(5-phospho-beta-D-ribosyl)-5-[(5-phospho-beta-D-ribosylamino)methylideneamino]imidazole-4-carboxamide. Its pathway is amino-acid biosynthesis; L-histidine biosynthesis; L-histidine from 5-phospho-alpha-D-ribose 1-diphosphate: step 3/9. Functionally, catalyzes the hydrolysis of the adenine ring of phosphoribosyl-AMP. This is Phosphoribosyl-AMP cyclohydrolase from Halorhodospira halophila (strain DSM 244 / SL1) (Ectothiorhodospira halophila (strain DSM 244 / SL1)).